Here is a 285-residue protein sequence, read N- to C-terminus: 2-dehydro-3-deoxyphosphooctonate aldolase (285 aa).

It belongs to the KdsA family.

Its subcellular location is the cytoplasm. It catalyses the reaction D-arabinose 5-phosphate + phosphoenolpyruvate + H2O = 3-deoxy-alpha-D-manno-2-octulosonate-8-phosphate + phosphate. It participates in carbohydrate biosynthesis; 3-deoxy-D-manno-octulosonate biosynthesis; 3-deoxy-D-manno-octulosonate from D-ribulose 5-phosphate: step 2/3. The protein operates within bacterial outer membrane biogenesis; lipopolysaccharide biosynthesis. The protein is 2-dehydro-3-deoxyphosphooctonate aldolase of Delftia acidovorans (strain DSM 14801 / SPH-1).